We begin with the raw amino-acid sequence, 464 residues long: Capsule biosynthesis protein CapB (464 aa).

A helical transmembrane segment spans residues Leu-65–Trp-85.

Its subcellular location is the cell membrane. Its pathway is capsule biogenesis; capsule polysaccharide biosynthesis. Its function is as follows. Essential for the synthesis of the polyglutamate capsule of B.anthracis which is one of the principal virulence factors during anthrax infection. May form a polyglutamyl synthetase complex together with proteins CapA and CapC. The polypeptide is Capsule biosynthesis protein CapB (capB) (Bacillus anthracis).